The chain runs to 451 residues: UPF0210 protein Asuc_1169 (451 aa).

The protein belongs to the UPF0210 family. As to quaternary structure, homodimer.

The chain is UPF0210 protein Asuc_1169 from Actinobacillus succinogenes (strain ATCC 55618 / DSM 22257 / CCUG 43843 / 130Z).